Reading from the N-terminus, the 194-residue chain is Segregation and condensation protein B (194 aa).

The protein belongs to the ScpB family. In terms of assembly, homodimer. Homodimerization may be required to stabilize the binding of ScpA to the Smc head domains. Component of a cohesin-like complex composed of ScpA, ScpB and the Smc homodimer, in which ScpA and ScpB bind to the head domain of Smc. The presence of the three proteins is required for the association of the complex with DNA.

It localises to the cytoplasm. Participates in chromosomal partition during cell division. May act via the formation of a condensin-like complex containing Smc and ScpA that pull DNA away from mid-cell into both cell halves. This Streptococcus agalactiae serotype Ia (strain ATCC 27591 / A909 / CDC SS700) protein is Segregation and condensation protein B.